Consider the following 847-residue polypeptide: Ras GTPase-activating protein 2 (847 aa).

A compositionally biased stretch (low complexity) spans 1–21 (MAAAAPAAAASPEAPAVSGSA). A disordered region spans residues 1–31 (MAAAAPAAAASPEAPAVSGSADPETGDEDSR). At Ala-2 the chain carries N-acetylalanine. 2 C2 domains span residues 19 to 137 (GSAD…ETWF) and 148 to 288 (VQGK…QAWY). The 218-residue stretch at 371–588 (NKLVPFITAV…TDVKKFLDEI (218 aa)) folds into the Ras-GAP domain. At Ser-554 the chain carries Phosphoserine. Residues 603-704 (VHLKEGEMYK…WIDVLCRVSR (102 aa)) enclose the PH domain. The Btk-type zinc finger occupies 706–742 (NHNRLSSFHPSAYLNGNWLCCQETSESTPGCKPCTAG). Residues His-714, Cys-725, Cys-726, and Cys-736 each contribute to the Zn(2+) site. Residues 819–847 (DEPHEKYRKKRSSSAKYGSKENPIVGKIS) form a disordered region.

It is found in the cell membrane. Functionally, inhibitory regulator of the Ras-cyclic AMP pathway. Binds inositol tetrakisphosphate (IP4) and phospholipids. The chain is Ras GTPase-activating protein 2 (Rasa2) from Mus musculus (Mouse).